The following is an 878-amino-acid chain: MTVTLPSVYSPQEVERKWYKYWEENGFFHTEPDEREPFCIVMPPPNVTGQLHMGHALDNTMQDILARYKRMQGFNTLWLPGTDHAGIATQAKVEEELRKEGLTKDDLGREKFLERVWAWKENYGNRITEQLRTLGASCDWKRERFTLDEGCSEAVKEVFLRLYEKGLIYRDYYITNWCPHCKTTISDIEVEHLEREGKLYYINYPLEDGSGYLTVATTRPETMLGDTAVAVHPEDERYRELIGKNVILPLVNRPIPVIADEYVDKEFGTGAVKITPAHDPNDFEVGLRHKLPQVVVLDDDAVMNENAGKYRGLDRYEARKKIVEDLKDLGLLVKEEEITHSVGHCYRCDTVIEPRLSKQWFVKMKPLAEPAIEAALTGKVKFVPERFTKIYLNWLYNIRDWCISRQLWWGHRIPVWYCDECGEVIPSREEVKSCPKCQSTKVHQDPDVLDTWFSSALWPFSTLGWPQNTEELKYYYPTSVLVTGRDIIFFWVARMLFMGLEFMKEVPFKEVLIHGLVLDAQGRKMSKSLGNGVDPVEVIASHGADSLRFMLVTGNTPGNDLRFHFERLDGARNFANKLWNASRFVLMNLEGFTPQGIKQEELTLADRWILARLNAVIDRVTAFLDEYELGEAARELYEFIWDEFCDWYVELTKPRLYGKMPGGDTAREVLYAVLKTTLELLHPFMPFITEEIWQRLPHEGKTIMLAPWPKGRADYENPEAVKQMSSLMEVIREIRRLRAEVNVPPAKRGEVILVTADEQLTRLLNENAWAIAALAQSEPRVVPKMEVPQGALTGVAAGVTIYLPLKDLIDLEKEKERLNKELKKVLAEIERLNQKLNNPGFLAKAPAEVVNKEREKLTAFYREKEVLEQRIGMLSHEL.

A 'HIGH' region motif is present at residues 45 to 55; sequence PNVTGQLHMGH. Residues 524-528 carry the 'KMSKS' region motif; sequence KMSKS. ATP is bound at residue Lys527. A coiled-coil region spans residues 804–871; the sequence is PLKDLIDLEK…REKEVLEQRI (68 aa).

This sequence belongs to the class-I aminoacyl-tRNA synthetase family. ValS type 1 subfamily. As to quaternary structure, monomer.

It is found in the cytoplasm. The enzyme catalyses tRNA(Val) + L-valine + ATP = L-valyl-tRNA(Val) + AMP + diphosphate. Functionally, catalyzes the attachment of valine to tRNA(Val). As ValRS can inadvertently accommodate and process structurally similar amino acids such as threonine, to avoid such errors, it has a 'posttransfer' editing activity that hydrolyzes mischarged Thr-tRNA(Val) in a tRNA-dependent manner. The protein is Valine--tRNA ligase of Carboxydothermus hydrogenoformans (strain ATCC BAA-161 / DSM 6008 / Z-2901).